Here is a 360-residue protein sequence, read N- to C-terminus: Ribosomal RNA large subunit methyltransferase M (360 aa).

Residues serine 187, cysteine 220–glycine 223, aspartate 239, aspartate 259, and aspartate 276 each bind S-adenosyl-L-methionine. The active-site Proton acceptor is the lysine 305.

The protein belongs to the class I-like SAM-binding methyltransferase superfamily. RNA methyltransferase RlmE family. RlmM subfamily. Monomer.

Its subcellular location is the cytoplasm. The enzyme catalyses cytidine(2498) in 23S rRNA + S-adenosyl-L-methionine = 2'-O-methylcytidine(2498) in 23S rRNA + S-adenosyl-L-homocysteine + H(+). Catalyzes the 2'-O-methylation at nucleotide C2498 in 23S rRNA. This is Ribosomal RNA large subunit methyltransferase M from Shewanella sediminis (strain HAW-EB3).